The sequence spans 165 residues: Pro-MCH (165 aa).

The first 21 residues, 1 to 21 (MAKMSLSSYMLMLAFSLFSHG), serve as a signal peptide directing secretion. Basic and acidic residues predominate over residues 69 to 82 (DESGFMKDDDDKTT). Positions 69 to 89 (DESGFMKDDDDKTTKNTGSKQ) are disordered. I143 carries the isoleucine amide modification. C153 and C162 form a disulfide bridge.

It belongs to the melanin-concentrating hormone family. Post-translationally, pro-MCH is processed differentially in the brain and in peripheral organs producing two neuropeptides; NEI and MCH. A third peptide, NGE, may also be produced. Preferential processing in neurons by prohormone convertase 2 (PC2) generates NEI. MCH is generated in neurons of the lateral hypothalmic area by several prohormone convertases including PC1/3, PC2 and PC5/6. As to expression, MCH is present in all regions of the brain and in neurointermediate lobe of the pituarity gland, with highest concentrations in the hypothalamus. Also expressed to a much lesser extent in stomach, lamina propria of both duodenum and colon, ovary, thymus, pancreas, adrenal gland and testis (spermatogonia, early spermatocytes and Sertoli cells). Weak expression in heart and lung. The other peptides are expressed at least in Sertoli cells, nei being also expressed in brain, stomach and proximal duodenum. In brain exclusively mature mch and nei peptides are present. In peripheral tissues a large product, encompassing the NEI and MCH domains of the precursor, is found predominantly. At low levels fully processed MCH and NEI peptides are present in gut. No expression in peripheral blood.

Its subcellular location is the secreted. In terms of biological role, MCH inhibits ACTH secretion at the end of the light on period which corresponds to the peak of the circadian rhythm in ACTH. Inhibits also stress induced ACTH release during the light off period of the cycle. Involved as a neurotransmitter or neuromodulator in a broad array of neuronal functions. Stimulates sexual behavior when injected into the ventromedial nucleus, this effect is antagonized by NEI. In the medial preoptic area, stimulates anxiety and sexual behavior. Antagonizes inhibitory effect of melanotropin alpha on exploration behavior. NEI can influence differentiation of neuronal processes in brain neurons. Affects the content of neurofilament protein in neuritogenesis (in vitro). May also be a neuromodulatory factor. In behavioral tests, it stimulates exploration and anxiety when injected into the ventromedial nucleus. Also stimulates grooming, locomotion and rearing. May antagonize the inhibitory effect of mch on ACTH release. Reduces dopamine and dopac release in the ventromedial nucleus. The protein is Pro-MCH (Pmch) of Rattus norvegicus (Rat).